A 75-amino-acid chain; its full sequence is Venom serine protease inhibitor BiVSPI (75 aa).

The N-terminal stretch at 1-20 is a signal peptide; that stretch reads MSRILFVFLAVMAIFSTSFG. 5 disulfide bridges follow: C23-C55, C32-C51, C35-C47, C39-C75, and C57-C69. Residues 23–75 enclose the TIL domain; sequence CGLNEEFKSCGSCEPTCAKPRVTICTMECKIGCQCKSGYLRNGEGTCVLPEKC.

Belongs to the serine protease inhibitor-like (TIL domain-containing) family. In terms of processing, may be O-glycosylated. Expressed by the venom gland (at protein level) and expressed in fat body.

The protein resides in the secreted. It localises to the target cell membrane. Antimicrobial venom serine protease inhibitor. Exhibits inhibitory activity against chymotrypsin (IC(50)=19.56 nM, Ki=15.24 nM) and microbial serine proteases, such as subtilisin A (IC(50)=6.57 nM, Ki=6.83 nM) and proteinase K (IC(50)=7.11 nM, Ki=7.02 nM). Has not activity against trypsin, plasmin, tPA, thrombin, factor Xa or elastase. Binds and inhibits Gram-positive bacteria (B.subtilis (MIC=29.45 uM), B.thuringiensis (MIC=91.03 uM)) and the entomopathogenic fungus B.bassiana (MIC=30.09 uM) but not to E.coli. The chain is Venom serine protease inhibitor BiVSPI from Bombus ignitus (Bumblebee).